A 714-amino-acid chain; its full sequence is Cell wall protein IFF7 (714 aa).

The N-terminal stretch at 1–19 (MLFTLSILSTLLFSTSISA) is a signal peptide. N200 carries N-linked (GlcNAc...) asparagine glycosylation. The span at 320 to 330 (GPVPSQKSLPS) shows a compositional bias: polar residues. Disordered regions lie at residues 320–633 (GPVP…AADS) and 660–692 (PIANESSSPSSSSSSSSSSSGTPGEVIPNANGS). Positions 346 to 504 (GSSSSSSVVS…SSTPLSGDSS (159 aa)) are enriched in low complexity. N390, N394, N399, N421, and N473 each carry an N-linked (GlcNAc...) asparagine glycan. Over residues 505–519 (QVSSLTTGTSPDTIA) the composition is skewed to polar residues. The span at 520 to 544 (SFQTDSTSFGFGSGSPSSGAVQSSG) shows a compositional bias: low complexity. The span at 545 to 558 (VTNSTPNTGDVNTQ) shows a compositional bias: polar residues. Composition is skewed to low complexity over residues 559-590 (SNTANIATSDNTATSTASNDTGVNTATATTTG) and 597-625 (NNNNNNNNNNNNNNNNNNNNNNNNNNTNN). Residues N577, N621, N624, and N663 are each glycosylated (N-linked (GlcNAc...) asparagine). Residues 665-679 (SSSPSSSSSSSSSSS) show a composition bias toward low complexity. N-linked (GlcNAc...) asparagine glycosylation occurs at N690. N690 carries the GPI-anchor amidated asparagine lipid modification. Residues 691 to 714 (GSSKLSIGMTFMISGFATMFALFM) constitute a propeptide, removed in mature form.

It belongs to the HYR1/IFF family. Post-translationally, the GPI-anchor is attached to the protein in the endoplasmic reticulum and serves to target the protein to the cell surface. There, the glucosamine-inositol phospholipid moiety is cleaved off and the GPI-modified mannoprotein is covalently attached via its lipidless GPI glycan remnant to the 1,6-beta-glucan of the outer cell wall layer.

The protein localises to the secreted. It localises to the cell wall. Its subcellular location is the membrane. In terms of biological role, GPI-anchored cell wall protein involved in cell wall organization, hyphal growth, as well as in host-fungal interaction and virulence. This chain is Cell wall protein IFF7 (IFF8), found in Candida albicans (strain SC5314 / ATCC MYA-2876) (Yeast).